Reading from the N-terminus, the 145-residue chain is Ribonuclease VapC7 (145 aa).

Positions 2 to 129 (IVLDTTVLVY…PAFADLSDVV (128 aa)) constitute a PINc domain. Residues Asp5 and Asp100 each contribute to the Mg(2+) site.

The protein belongs to the PINc/VapC protein family. Mg(2+) serves as cofactor.

Its function is as follows. Toxic component of a type II toxin-antitoxin (TA) system. An RNase. The cognate antitoxin is VapB7. This is Ribonuclease VapC7 from Mycobacterium tuberculosis (strain ATCC 25618 / H37Rv).